The sequence spans 1408 residues: Palladin (1408 aa).

The interval 69–229 is disordered; sequence SKSPISLCET…SASQSPTADQ (161 aa). Composition is skewed to polar residues over residues 149–169 and 193–229; these read PNPSSKPKTAQQSKAGPQSQL and RSPNGESSSPDSGYLSPKNQPSALMSASASQSPTADQ. Ser-194 is subject to Phosphoserine. Ig-like C2-type domains follow at residues 278-367 and 448-546; these read PRFI…AEVF and PVFT…LVIT. Disulfide bonds link Cys-299/Cys-351 and Cys-469/Cys-528. Positions 569–573 are interaction with VASP; the sequence is FPPPP. 2 disordered regions span residues 631-660 and 687-727; these read NGKAYGNKSPPTPTALLSPTKEPPPLLAKP and PPGV…VPSE. At Ser-639 the chain carries Phosphoserine. Phosphothreonine is present on Thr-642. At Ser-648 the chain carries Phosphoserine. An interaction with LASP1 region spans residues 653–683; the sequence is PPPLLAKPKLDPLKLQQLQNQVRLEQEACAW. The interval 683-713 is interaction with SORBS2, SPIN90 and SRC; sequence WPPAPPGVPCNSSSSGSSAPPSPPFPPPPPA. Residues 691-701 show a composition bias toward low complexity; the sequence is PCNSSSSGSSA. Residues Ser-700, Ser-704, and Ser-744 each carry the phosphoserine modification. Positions 702-714 are enriched in pro residues; the sequence is PPSPPFPPPPPAF. Disordered regions lie at residues 758–854, 882–904, and 960–981; these read NLGP…RFGP, KGVTPAGFPKKSSRTARIASDEE, and ETAANQDAGAPRASVGGPLDGQ. Residues 765-779 show a composition bias toward low complexity; the sequence is LPTPTSSPSSSSLPS. Pro residues-rich tracts occupy residues 780–797, 807–818, and 828–840; these read PLSPTPRPFGRAPGPPFV, SPSPPPPPPPVF, and DVFPLPPPPPPLP. Residues 782 to 842 are interaction with EPS8; sequence SPTPRPFGRA…PPPPPPLPSS (61 aa). Positions 807-842 are interaction with SORBS2, SPIN90, SRC and PFN1; it reads SPSPPPPPPPVFSPSAAYPVPDVFPLPPPPPPLPSS. Residues 830-834 are interaction with VASP; the sequence is FPLPP. Ser-901 carries the phosphoserine modification. Residues Ser-1004 and Ser-1009 each carry the phosphoserine modification. In terms of domain architecture, Ig-like C2-type 3 spans 1026–1110; the sequence is PFFEMKLKHY…MAANPQGRVS (85 aa). Residues 1121-1150 are disordered; sequence NQRGRSPRSPSGHPHARRPRSRSRDSGDEN. The span at 1123–1133 shows a compositional bias: low complexity; that stretch reads RGRSPRSPSGH. 4 positions are modified to phosphoserine: Ser-1126, Ser-1129, Ser-1131, and Ser-1141. The residue at position 1143 (Ser-1143) is a Phosphoserine; by PKB/AKT1. Position 1146 is a phosphoserine (Ser-1146). 2 consecutive Ig-like C2-type domains span residues 1160-1251 and 1259-1349; these read PHFL…LVVA and PVFM…ARLD. Interaction with EZR regions lie at residues 1162-1251 and 1261-1351; these read FLQA…LVVA and FMEK…LDVY. Residues Cys-1181 and Cys-1233 are joined by a disulfide bond. Ser-1377 bears the Phosphoserine mark.

Belongs to the myotilin/palladin family. As to quaternary structure, interacts with EPS8. Interacts with LASP1. Interacts with VASP. Interacts with ACTN. Interacts with SORBS2. Interacts with PFN1. Interacts with LPP. Interacts with SPIN90. Interacts with SRC. Interacts with EZR. Interacts with RAI14. In terms of processing, phosphorylated predominantly on serines and, to a lesser extent, on tyrosines. Phosphorylation at Ser-1143 by PKB/AKT1 modulates cytoskeletal organization and cell motility. As to expression, detected in both muscle and non-muscle tissues and cells (at protein level). Isoform 3 is widely expressed, isoform 4 is particularly abundant in tissues rich in smooth muscle and in the cardiac muscle and isoform 1 is detected in heart.

Its subcellular location is the cytoplasm. The protein localises to the cytoskeleton. It localises to the cell junction. It is found in the focal adhesion. The protein resides in the myofibril. Its subcellular location is the sarcomere. The protein localises to the z line. It localises to the cell projection. It is found in the ruffle. The protein resides in the podosome. Its subcellular location is the lamellipodium. The protein localises to the axon. It localises to the growth cone. Functionally, cytoskeletal protein required for organization of normal actin cytoskeleton. Roles in establishing cell morphology, motility, cell adhesion and cell-extracellular matrix interactions in a variety of cell types. May function as a scaffolding molecule with the potential to influence both actin polymerization and the assembly of existing actin filaments into higher-order arrays. Binds to proteins that bind to either monomeric or filamentous actin. Localizes at sites where active actin remodeling takes place, such as lamellipodia and membrane ruffles. Different isoforms may have functional differences. Involved in the control of morphological and cytoskeletal changes associated with dendritic cell maturation. Involved in targeting ACTN to specific subcellular locations. May be required for the initiation of neural tube closure. The polypeptide is Palladin (Palld) (Mus musculus (Mouse)).